Consider the following 95-residue polypeptide: Opiscorpine-4 (95 aa).

The N-terminal stretch at M1 to C19 is a signal peptide. A BetaSPN-type CS-alpha/beta domain is found at E55 to Y95. 3 cysteine pairs are disulfide-bonded: C58–C82, C68–C87, and C72–C89.

Belongs to the long chain scorpion toxin family. Class 3 subfamily. Expressed by the venom gland.

Its subcellular location is the secreted. Functionally, has antimicrobial activity against yeasts and bacteria. This chain is Opiscorpine-4, found in Opistophthalmus carinatus (African yellow leg scorpion).